Consider the following 425-residue polypeptide: 3-phosphoshikimate 1-carboxyvinyltransferase (425 aa).

Residues Lys20, Ser21, and Arg25 each coordinate 3-phosphoshikimate. Lys20 serves as a coordination point for phosphoenolpyruvate. Phosphoenolpyruvate is bound by residues Gly92 and Arg120. The 3-phosphoshikimate site is built by Ser165, Gln167, Asp312, and Lys339. Gln167 is a phosphoenolpyruvate binding site. The Proton acceptor role is filled by Asp312. Positions 343 and 385 each coordinate phosphoenolpyruvate.

The protein belongs to the EPSP synthase family. In terms of assembly, monomer.

It is found in the cytoplasm. The catalysed reaction is 3-phosphoshikimate + phosphoenolpyruvate = 5-O-(1-carboxyvinyl)-3-phosphoshikimate + phosphate. Its pathway is metabolic intermediate biosynthesis; chorismate biosynthesis; chorismate from D-erythrose 4-phosphate and phosphoenolpyruvate: step 6/7. Catalyzes the transfer of the enolpyruvyl moiety of phosphoenolpyruvate (PEP) to the 5-hydroxyl of shikimate-3-phosphate (S3P) to produce enolpyruvyl shikimate-3-phosphate and inorganic phosphate. The chain is 3-phosphoshikimate 1-carboxyvinyltransferase from Alkaliphilus metalliredigens (strain QYMF).